A 411-amino-acid chain; its full sequence is Multidrug resistance protein MdtG (411 aa).

Transmembrane regions (helical) follow at residues 17-37 (LFVA…VMPF), 59-79 (LVFS…GGLA), 92-112 (ALGM…WQFL), 116-136 (AVLG…ATQV), 147-167 (WLST…GLLA), 174-194 (PVFF…LFAV), 222-242 (VLTL…IAPI), 257-277 (LAFV…ISAP), 291-311 (ILVA…MVQN), 320-340 (FLLG…LIYN), and 379-399 (AVFV…WITL).

It belongs to the major facilitator superfamily. DHA1 family. MdtG (TC 2.A.1.2.20) subfamily.

The protein localises to the cell inner membrane. This Erwinia billingiae (strain Eb661) protein is Multidrug resistance protein MdtG.